The primary structure comprises 222 residues: MPCRIAIDGPAGSGKTTVAKILADKLGIYYLDTGAMYRIIGLYLDKKGVENDSDIERELSTIKLEFINGDFYINGKRVGDEIRTPYAGICASKYAKKAIVREFLTRIQQKISKNENIVVEGRDIGTVVIPDAEVKIFLVASAEERAKRRYKELLDKGVKVSYEEVLNEIILRDKQDTEREIAPLRQPDDAVLIDSTKYTIEEVINKILEVVLEKCKLKLQKE.

Residue 9–17 (GPAGSGKTT) participates in ATP binding.

This sequence belongs to the cytidylate kinase family. Type 1 subfamily.

It localises to the cytoplasm. It carries out the reaction CMP + ATP = CDP + ADP. The enzyme catalyses dCMP + ATP = dCDP + ADP. The chain is Cytidylate kinase from Thermosipho africanus (strain TCF52B).